A 477-amino-acid polypeptide reads, in one-letter code: Histidine--tRNA ligase (477 aa).

This sequence belongs to the class-II aminoacyl-tRNA synthetase family. As to quaternary structure, homodimer.

The protein resides in the cytoplasm. The catalysed reaction is tRNA(His) + L-histidine + ATP = L-histidyl-tRNA(His) + AMP + diphosphate + H(+). In Xanthomonas campestris pv. campestris (strain 8004), this protein is Histidine--tRNA ligase.